The following is a 73-amino-acid chain: Venom protein 55.1 (73 aa).

A signal peptide spans 1 to 19 (MNFLCILFVVSLISSLSKC). Proline amide is present on Pro-57. The propeptide occupies 61 to 73 (RRSFDLYALVNAK).

Belongs to the diuretic hormone class 2 family. In terms of tissue distribution, expressed by the venom gland.

The protein localises to the secreted. Functionally, regulates fluid secretion. The chain is Venom protein 55.1 from Lychas mucronatus (Chinese swimming scorpion).